Reading from the N-terminus, the 198-residue chain is Recombination protein RecR (198 aa).

The segment at 57-72 adopts a C4-type zinc-finger fold; sequence CSVCGNLTDEDPCSIC. A Toprim domain is found at 80-175; sequence SMILVVEDSK…KVTRLARGLA (96 aa).

This sequence belongs to the RecR family.

May play a role in DNA repair. It seems to be involved in an RecBC-independent recombinational process of DNA repair. It may act with RecF and RecO. This Streptococcus uberis (strain ATCC BAA-854 / 0140J) protein is Recombination protein RecR.